The sequence spans 1373 residues: DNA-directed RNA polymerase subunit beta (1373 aa).

It belongs to the RNA polymerase beta chain family. In terms of assembly, the RNAP catalytic core consists of 2 alpha, 1 beta, 1 beta' and 1 omega subunit. When a sigma factor is associated with the core the holoenzyme is formed, which can initiate transcription.

It carries out the reaction RNA(n) + a ribonucleoside 5'-triphosphate = RNA(n+1) + diphosphate. Functionally, DNA-dependent RNA polymerase catalyzes the transcription of DNA into RNA using the four ribonucleoside triphosphates as substrates. This chain is DNA-directed RNA polymerase subunit beta, found in Rhodopseudomonas palustris (strain BisB18).